A 128-amino-acid polypeptide reads, in one-letter code: Large ribosomal subunit protein bL12 (128 aa).

This sequence belongs to the bacterial ribosomal protein bL12 family. Homodimer. Part of the ribosomal stalk of the 50S ribosomal subunit. Forms a multimeric L10(L12)X complex, where L10 forms an elongated spine to which 2 to 4 L12 dimers bind in a sequential fashion. Binds GTP-bound translation factors.

In terms of biological role, forms part of the ribosomal stalk which helps the ribosome interact with GTP-bound translation factors. Is thus essential for accurate translation. This Petrotoga mobilis (strain DSM 10674 / SJ95) protein is Large ribosomal subunit protein bL12.